The chain runs to 64 residues: Conotoxin mr5.1a (64 aa).

Residues 1–19 form the signal peptide; that stretch reads MRCVPVFVILLLLIASAPS. The propeptide occupies 20 to 48; the sequence is VDARLKTKDDMPLPSSHANIKRTLQIHRN. Residue E60 is modified to 4-carboxyglutamate.

Belongs to the conotoxin T superfamily. Post-translationally, contains 2 disulfide bonds that can be either 'C1-C3, C2-C4' or 'C1-C4, C2-C3', since these disulfide connectivities have been observed for conotoxins with cysteine framework V (for examples, see AC P0DQQ7 and AC P81755). Expressed by the venom duct.

The protein localises to the secreted. This chain is Conotoxin mr5.1a, found in Conus marmoreus (Marble cone).